Here is a 393-residue protein sequence, read N- to C-terminus: Dual specificity mitogen-activated protein kinase kinase 1 (393 aa).

The segment at 1–27 (MPKKKPTPIQLNPAPDGSAVNGTSSAE) is disordered. One can recognise a Protein kinase domain in the interval 68-361 (FEKISELGAG…LKQLMVHAFI (294 aa)). ATP contacts are provided by residues 74–82 (LGAGNGGVV) and Lys-97. The active-site Proton acceptor is Asp-190. 2 positions are modified to phosphoserine; by RAF: Ser-218 and Ser-222. The segment at 270–307 (ELELLFGCHVEGDAAETPPRPRTPGRPLSSYGMDSRPP) is RAF1-binding. Thr-286 bears the Phosphothreonine mark. The residue at position 292 (Thr-292) is a Phosphothreonine; by MAPK1. Ser-298 carries the phosphoserine; by PAK modification.

The protein belongs to the protein kinase superfamily. STE Ser/Thr protein kinase family. MAP kinase kinase subfamily. Found in a complex with at least BRAF, HRAS, MAP2K1, MAPK3/ERK1 and RGS14. Forms a heterodimer with MAP2K2/MEK2. Forms heterodimers with KSR2 which further dimerize to form tetramers. Interacts with KSR1 or KSR2 and BRAF; the interaction with KSR1 or KSR2 mediates KSR1-BRAF or KSR2-BRAF dimerization. Interacts with ARBB2, LAMTOR3, MAPK1/ERK2 and RAF1. Interacts with MAPK1/ERK2. Interacts with MORG1. Interacts with PPARG. Interacts with SGK1. Interacts with BIRC6/bruce. Interacts with KAT7; the interaction promotes KAT7 phosphorylation. Interacts with RAF1 and NEK10; the interaction is required for ERK1/2-signaling pathway activation in response to UV irradiation. Interacts with TRAF3IP3. Interacts with MOS. Phosphorylation at Ser-218 and Ser-222 by MAP kinase kinase kinases (BRAF or MEKK1) positively regulates kinase activity. Also phosphorylated at Thr-292 by MAPK1/ERK2 and at Ser-298 by PAK. MAPK1/ERK2 phosphorylation of Thr-292 occurs in response to cellular adhesion and leads to inhibition of Ser-298 phosphorylation by PAK. Autophosphorylated at Ser-218 and Ser-222, autophosphosphorylation is promoted by NEK10 following UV irradiation.

The protein localises to the cytoplasm. Its subcellular location is the cytoskeleton. It localises to the microtubule organizing center. It is found in the centrosome. The protein resides in the spindle pole body. The protein localises to the nucleus. Its subcellular location is the membrane. It catalyses the reaction L-seryl-[protein] + ATP = O-phospho-L-seryl-[protein] + ADP + H(+). The enzyme catalyses L-threonyl-[protein] + ATP = O-phospho-L-threonyl-[protein] + ADP + H(+). It carries out the reaction L-tyrosyl-[protein] + ATP = O-phospho-L-tyrosyl-[protein] + ADP + H(+). Its activity is regulated as follows. Ras proteins such as HRAS mediate the activation of RAF proteins such as RAF1 or BRAF which in turn activate extracellular signal-regulated kinases (ERK) through MAPK (mitogen-activated protein kinases) and ERK kinases MAP2K1/MEK1 and MAP2K2/MEK2. Activation occurs through phosphorylation of Ser-218 and Ser-222. MAP2K1/MEK1 binds KSR1 or KSR2 releasing the inhibitory intramolecular interaction between KSR1 or KSR2 protein kinase and N-terminal domains. This allows KSR1 or KSR2 dimerization with BRAF leading to BRAF activation and phosphorylation of MAP2K1. MAP2K1/MEK1 is also the target of negative feed-back regulation by its substrate kinases, such as MAPK1/ERK2. These phosphorylate MAP2K1/MEK1 on Thr-292, thereby facilitating dephosphorylation of the activating residues Ser-218 and Ser-222. Inhibited by serine/threonine phosphatase 2A. In terms of biological role, dual specificity protein kinase which acts as an essential component of the MAP kinase signal transduction pathway. Binding of extracellular ligands such as growth factors, cytokines and hormones to their cell-surface receptors activates RAS and this initiates RAF1 activation. RAF1 then further activates the dual-specificity protein kinases MAP2K1/MEK1 and MAP2K2/MEK2. Both MAP2K1/MEK1 and MAP2K2/MEK2 function specifically in the MAPK/ERK cascade, and catalyze the concomitant phosphorylation of a threonine and a tyrosine residue in a Thr-Glu-Tyr sequence located in the extracellular signal-regulated kinases MAPK3/ERK1 and MAPK1/ERK2, leading to their activation and further transduction of the signal within the MAPK/ERK cascade. Activates BRAF in a KSR1 or KSR2-dependent manner; by binding to KSR1 or KSR2 releases the inhibitory intramolecular interaction between KSR1 or KSR2 protein kinase and N-terminal domains which promotes KSR1 or KSR2-BRAF dimerization and BRAF activation. Depending on the cellular context, this pathway mediates diverse biological functions such as cell growth, adhesion, survival and differentiation, predominantly through the regulation of transcription, metabolism and cytoskeletal rearrangements. One target of the MAPK/ERK cascade is peroxisome proliferator-activated receptor gamma (PPARG), a nuclear receptor that promotes differentiation and apoptosis. MAP2K1/MEK1 has been shown to export PPARG from the nucleus. The MAPK/ERK cascade is also involved in the regulation of endosomal dynamics, including lysosome processing and endosome cycling through the perinuclear recycling compartment (PNRC), as well as in the fragmentation of the Golgi apparatus during mitosis. The chain is Dual specificity mitogen-activated protein kinase kinase 1 (Map2k1) from Mus musculus (Mouse).